The chain runs to 373 residues: Enoyl-[acyl-carrier-protein] reductase, mitochondrial (373 aa).

A mitochondrion-targeting transit peptide spans 1–53 (MLVSRRLTGARARAPLLASLLEAWCRQGRTTSSYSAFSEPSHVRALVYGNHGD). An N6-acetyllysine; alternate modification is found at lysine 61. Position 61 is an N6-succinyllysine; alternate (lysine 61). The active-site Proton donor is tyrosine 94. Residues asparagine 167, 193 to 196 (NSGV), and 216 to 218 (RDR) each bind NADP(+). N6-acetyllysine; alternate is present on residues lysine 252 and lysine 267. N6-succinyllysine; alternate occurs at positions 252 and 267. NADP(+)-binding positions include 285–288 (YGGM) and 310–312 (FWL). Lysine 316 carries the post-translational modification N6-succinyllysine. An NADP(+)-binding site is contributed by lysine 368.

The protein belongs to the zinc-containing alcohol dehydrogenase family. Quinone oxidoreductase subfamily. Homodimer. As to quaternary structure, interacts with PPARA in the nucleus and increases its activity.

Its subcellular location is the mitochondrion. It localises to the cytoplasm. It is found in the nucleus. It carries out the reaction a 2,3-saturated acyl-[ACP] + NADP(+) = a (2E)-enoyl-[ACP] + NADPH + H(+). The enzyme catalyses (2E)-butenoyl-[ACP] + NADPH + H(+) = butanoyl-[ACP] + NADP(+). The catalysed reaction is (2E)-hexenoyl-[ACP] + NADPH + H(+) = hexanoyl-[ACP] + NADP(+). It catalyses the reaction (2E)-octenoyl-[ACP] + NADPH + H(+) = octanoyl-[ACP] + NADP(+). It carries out the reaction (2E)-decenoyl-[ACP] + NADPH + H(+) = decanoyl-[ACP] + NADP(+). The enzyme catalyses (2E)-dodecenoyl-[ACP] + NADPH + H(+) = dodecanoyl-[ACP] + NADP(+). The catalysed reaction is (2E)-tetradecenoyl-[ACP] + NADPH + H(+) = tetradecanoyl-[ACP] + NADP(+). It catalyses the reaction (2E)-hexadecenoyl-[ACP] + NADPH + H(+) = hexadecanoyl-[ACP] + NADP(+). Catalyzes the NADPH-dependent reduction of trans-2-enoyl thioesters in mitochondrial fatty acid synthesis (fatty acid synthesis type II). Fatty acid chain elongation in mitochondria uses acyl carrier protein (ACP) as an acyl group carrier, but the enzyme accepts both ACP and CoA thioesters as substrates in vitro. Displays a preference for medium-chain over short- and long-chain substrates. May provide the octanoyl chain used for lipoic acid biosynthesis, regulating protein lipoylation and mitochondrial respiratory activity particularly in Purkinje cells. Involved in iron homeostasis; affecting Fe-S cluster assembly and ceramide metabolism. Required for proper morphology and bioenergetic functions of mitochondria. Required for maintenance of neurons. This chain is Enoyl-[acyl-carrier-protein] reductase, mitochondrial (Mecr), found in Rattus norvegicus (Rat).